Consider the following 469-residue polypeptide: UDP-N-acetylmuramate--L-alanine ligase (469 aa).

An ATP-binding site is contributed by 113-119; sequence GTHGKTT.

It belongs to the MurCDEF family.

The protein resides in the cytoplasm. The catalysed reaction is UDP-N-acetyl-alpha-D-muramate + L-alanine + ATP = UDP-N-acetyl-alpha-D-muramoyl-L-alanine + ADP + phosphate + H(+). It participates in cell wall biogenesis; peptidoglycan biosynthesis. Its function is as follows. Cell wall formation. This chain is UDP-N-acetylmuramate--L-alanine ligase, found in Neisseria meningitidis serogroup C / serotype 2a (strain ATCC 700532 / DSM 15464 / FAM18).